The sequence spans 124 residues: Large ribosomal subunit protein bL17 (124 aa).

The protein belongs to the bacterial ribosomal protein bL17 family. As to quaternary structure, part of the 50S ribosomal subunit. Contacts protein L32.

This Trichlorobacter lovleyi (strain ATCC BAA-1151 / DSM 17278 / SZ) (Geobacter lovleyi) protein is Large ribosomal subunit protein bL17.